The following is a 31-amino-acid chain: U2-theraphotoxin-Hhn1a (31 aa).

Intrachain disulfides connect Cys2-Cys14, Cys7-Cys19, and Cys13-Cys26.

As to expression, expressed by the venom gland.

Its subcellular location is the secreted. Functionally, agglutinates erythrocytes. The chain is U2-theraphotoxin-Hhn1a from Cyriopagopus hainanus (Chinese bird spider).